The sequence spans 411 residues: Prophage integrase IntR (411 aa).

In terms of domain architecture, Core-binding (CB) spans 81-176 (KTFGELCDIW…LLCSLLRFAY (96 aa)). Residues 197 to 404 (IKPDPLSKTE…IDDMNDEQIA (208 aa)) enclose the Tyr recombinase domain. Residues Arg-231, Lys-266, Arg-358, and His-381 contribute to the active site. The O-(3'-phospho-DNA)-tyrosine intermediate role is filled by Tyr-391.

It belongs to the 'phage' integrase family.

Functionally, integrase is necessary for integration of the phage into the host genome by site-specific recombination. In conjunction with excisionase, integrase is also necessary for excision of the prophage from the host genome. This is Prophage integrase IntR (intR) from Escherichia coli (strain K12).